The chain runs to 59 residues: Toxin TxpA (59 aa).

The helical transmembrane segment at 7–27 threads the bilayer; the sequence is LMVMIGFANLIGGIMTWVISL.

It is found in the cell membrane. Its function is as follows. Toxic component of a type I toxin-antitoxin (TA) system. Overexpression of txpA causes cell lysis; the TxpA protein has been suggested to act on the cell membrane or might possibly block cell wall synthesis. Overexpression in E.coli is not toxic. In Bacillus subtilis (strain 168), this protein is Toxin TxpA.